A 292-amino-acid polypeptide reads, in one-letter code: 33 kDa chaperonin (292 aa).

Intrachain disulfides connect Cys-230/Cys-232 and Cys-263/Cys-266.

Belongs to the HSP33 family. Post-translationally, under oxidizing conditions two disulfide bonds are formed involving the reactive cysteines. Under reducing conditions zinc is bound to the reactive cysteines and the protein is inactive.

Its subcellular location is the cytoplasm. Functionally, redox regulated molecular chaperone. Protects both thermally unfolding and oxidatively damaged proteins from irreversible aggregation. Plays an important role in the bacterial defense system toward oxidative stress. The chain is 33 kDa chaperonin from Serratia proteamaculans (strain 568).